The sequence spans 165 residues: Ubiquitin-like protein 4B (165 aa).

One can recognise a Ubiquitin-like domain in the interval 1–76 (MFLTVKLLLG…ISVVVRPLEK (76 aa)). Residues 139 to 165 (EPLAQPTGEREPEVLSPNKEEEKEAVQ) form a disordered region. A compositionally biased stretch (basic and acidic residues) spans 146 to 165 (GEREPEVLSPNKEEEKEAVQ).

It is found in the cytoplasm. This is Ubiquitin-like protein 4B (UBL4B) from Bos taurus (Bovine).